We begin with the raw amino-acid sequence, 119 residues long: Large ribosomal subunit protein bL20 (119 aa).

This sequence belongs to the bacterial ribosomal protein bL20 family.

Binds directly to 23S ribosomal RNA and is necessary for the in vitro assembly process of the 50S ribosomal subunit. It is not involved in the protein synthesizing functions of that subunit. This chain is Large ribosomal subunit protein bL20, found in Alkalilimnicola ehrlichii (strain ATCC BAA-1101 / DSM 17681 / MLHE-1).